The primary structure comprises 268 residues: Zinc finger protein SNAI2 (268 aa).

The SNAG domain stretch occupies residues Met1–Ser20. The interval Ser80–Leu117 is disordered. 4 consecutive C2H2-type zinc fingers follow at residues Phe128–His150, Phe159–His181, Cys185–His207, and Phe213–His235. The C2H2-type 5; atypical zinc-finger motif lies at Tyr241–Cys264.

It belongs to the snail C2H2-type zinc-finger protein family. As to quaternary structure, interacts (via SNAG domain) with LIMD1 (via LIM domains), WTIP (via LIM domains) and AJUBA (via LIM domains). Interacts (via zinc fingers) with KPNA2, KPNB1, and TNPO1. May interact (via zinc fingers) with IPO7. Phosphorylated by GSK3B. Once phosphorylated, it becomes a target for ubiquitination. Post-translationally, ubiquitinated by the SCF(FBXO11) complex; ubiquitination requires previous GSK3B-mediated SNAI2 phosphorylation. In terms of tissue distribution, expressed in most adult human tissues, including spleen, thymus, prostate, testis, ovary, small intestine, colon, heart, brain, placenta, lung, liver, skeletal muscle, kidney and pancreas. Not detected in peripheral blood leukocyte. Expressed in the dermis and in all layers of the epidermis, with high levels of expression in the basal layers (at protein level). Expressed in osteoblasts (at protein level). Expressed in mesenchymal stem cells (at protein level). Expressed in breast tumor cells (at protein level).

Its subcellular location is the nucleus. It localises to the cytoplasm. Functionally, transcriptional repressor that modulates both activator-dependent and basal transcription. Involved in the generation and migration of neural crest cells. Plays a role in mediating RAF1-induced transcriptional repression of the TJ protein, occludin (OCLN) and subsequent oncogenic transformation of epithelial cells. Represses BRCA2 expression by binding to its E2-box-containing silencer and recruiting CTBP1 and HDAC1 in breast cells. In epidermal keratinocytes, binds to the E-box in ITGA3 promoter and represses its transcription. Involved in the regulation of ITGB1 and ITGB4 expression and cell adhesion and proliferation in epidermal keratinocytes. Binds to E-box2 domain of BSG and activates its expression during TGFB1-induced epithelial-mesenchymal transition (EMT) in hepatocytes. Represses E-Cadherin/CDH1 transcription via E-box elements. Involved in osteoblast maturation. Binds to RUNX2 and SOC9 promoters and may act as a positive and negative transcription regulator, respectively, in osteoblasts. Binds to CXCL12 promoter via E-box regions in mesenchymal stem cells and osteoblasts. Plays an essential role in TWIST1-induced EMT and its ability to promote invasion and metastasis. The sequence is that of Zinc finger protein SNAI2 (SNAI2) from Homo sapiens (Human).